The sequence spans 118 residues: Holo-[acyl-carrier-protein] synthase (118 aa).

Mg(2+)-binding residues include D8 and E58.

The protein belongs to the P-Pant transferase superfamily. AcpS family. Mg(2+) serves as cofactor.

The protein resides in the cytoplasm. The catalysed reaction is apo-[ACP] + CoA = holo-[ACP] + adenosine 3',5'-bisphosphate + H(+). Its function is as follows. Transfers the 4'-phosphopantetheine moiety from coenzyme A to a Ser of acyl-carrier-protein. This Streptococcus pyogenes serotype M12 (strain MGAS2096) protein is Holo-[acyl-carrier-protein] synthase.